A 295-amino-acid polypeptide reads, in one-letter code: Ribosomal protein L11 methyltransferase (295 aa).

S-adenosyl-L-methionine is bound by residues Thr139, Gly166, Asp188, and Asn231.

It belongs to the methyltransferase superfamily. PrmA family.

The protein localises to the cytoplasm. The catalysed reaction is L-lysyl-[protein] + 3 S-adenosyl-L-methionine = N(6),N(6),N(6)-trimethyl-L-lysyl-[protein] + 3 S-adenosyl-L-homocysteine + 3 H(+). Its function is as follows. Methylates ribosomal protein L11. In Cyanothece sp. (strain PCC 7425 / ATCC 29141), this protein is Ribosomal protein L11 methyltransferase.